Consider the following 474-residue polypeptide: Ubiquinol-cytochrome-c reductase complex core protein 2, mitochondrial (474 aa).

A mitochondrion-targeting transit peptide spans 1-42 (MKSVVRSKGTQALFRRFSSALGDSINPNQVGVGDNVIRVNGR).

It belongs to the peptidase M16 family. UQCRC2/QCR2 subfamily. As to quaternary structure, component of the ubiquinol-cytochrome c oxidoreductase (cytochrome b-c1 complex, complex III, CIII), a multisubunit enzyme composed of 3 respiratory subunits cytochrome b, cytochrome c1 and Rieske protein, 2 core protein subunits, and additional low-molecular weight protein subunits. The complex exists as an obligatory dimer and forms supercomplexes (SCs) in the inner mitochondrial membrane with cytochrome c oxidase (complex IV, CIV).

The protein localises to the mitochondrion inner membrane. Component of the ubiquinol-cytochrome c oxidoreductase, a multisubunit transmembrane complex that is part of the mitochondrial electron transport chain which drives oxidative phosphorylation. The respiratory chain contains 3 multisubunit complexes succinate dehydrogenase (complex II, CII), ubiquinol-cytochrome c oxidoreductase (cytochrome b-c1 complex, complex III, CIII) and cytochrome c oxidase (complex IV, CIV), that cooperate to transfer electrons derived from NADH and succinate to molecular oxygen, creating an electrochemical gradient over the inner membrane that drives transmembrane transport and the ATP synthase. The cytochrome b-c1 complex catalyzes electron transfer from ubiquinol to cytochrome c, linking this redox reaction to translocation of protons across the mitochondrial inner membrane, with protons being carried across the membrane as hydrogens on the quinol. In the process called Q cycle, 2 protons are consumed from the matrix, 4 protons are released into the intermembrane space and 2 electrons are passed to cytochrome c. This is Ubiquinol-cytochrome-c reductase complex core protein 2, mitochondrial from Euglena gracilis.